Here is a 70-residue protein sequence, read N- to C-terminus: Large ribosomal subunit protein bL31 (70 aa).

Zn(2+)-binding residues include C16, C18, C37, and C40.

This sequence belongs to the bacterial ribosomal protein bL31 family. Type A subfamily. Part of the 50S ribosomal subunit. Zn(2+) is required as a cofactor.

In terms of biological role, binds the 23S rRNA. The polypeptide is Large ribosomal subunit protein bL31 (Shewanella frigidimarina (strain NCIMB 400)).